Here is a 405-residue protein sequence, read N- to C-terminus: S-adenosylmethionine:tRNA ribosyltransferase-isomerase (405 aa).

This sequence belongs to the QueA family. As to quaternary structure, monomer.

Its subcellular location is the cytoplasm. It carries out the reaction 7-aminomethyl-7-carbaguanosine(34) in tRNA + S-adenosyl-L-methionine = epoxyqueuosine(34) in tRNA + adenine + L-methionine + 2 H(+). It functions in the pathway tRNA modification; tRNA-queuosine biosynthesis. Functionally, transfers and isomerizes the ribose moiety from AdoMet to the 7-aminomethyl group of 7-deazaguanine (preQ1-tRNA) to give epoxyqueuosine (oQ-tRNA). In Psychrobacter cryohalolentis (strain ATCC BAA-1226 / DSM 17306 / VKM B-2378 / K5), this protein is S-adenosylmethionine:tRNA ribosyltransferase-isomerase.